The sequence spans 662 residues: ATP-dependent RNA helicase DDX3X (662 aa).

An N-acetylserine modification is found at S2. Residues 2–139 (SHVAVENALG…KSDEDDWSKP (138 aa)) are required for TBK1 and IKBKE-dependent IFNB1 activation. Positions 12-21 (LDQQFAGLDL) match the Nuclear export signal motif. Residues 19–144 (LDLNSSDNQS…DWSKPLPPSE (126 aa)) are disordered. Polar residues predominate over residues 21–34 (LNSSDNQSGGSTAS). Residues 38 to 44 (YIPPHLR) form an interaction with EIF4E region. Basic and acidic residues predominate over residues 44-68 (RNREATKGFYDKDSSGWSSSKDKDA). K55 bears the N6-acetyllysine mark. The span at 70-89 (SSFGSRSDSRGKSSFFSDRG) shows a compositional bias: low complexity. The segment at 81–90 (KSSFFSDRGS) is interaction with VACV protein K7. Phosphoserine occurs at positions 82, 86, and 90. The involved in binding to RNA G-quadruplex stretch occupies residues 88-123 (RGSGSRGRFDDRGRSDYDGIGSRGDRSGFGKFERGG). The segment covering 94 to 130 (GRFDDRGRSDYDGIGSRGDRSGFGKFERGGNSRWCDK) has biased composition (basic and acidic residues). The interaction with IKBKE stretch occupies residues 100-110 (GRSDYDGIGSR). Residues 100 to 662 (GRSDYDGIGS…NSQGVDWWGN (563 aa)) are interaction with GSK3B. R101 bears the Omega-N-methylarginine mark. A Phosphoserine; by IKKE modification is found at S102. Position 104 is a phosphotyrosine (Y104). R110 bears the Omega-N-methylarginine mark. K118 is subject to N6-acetyllysine. Phosphoserine is present on S131. Residues 139-172 (PLPPSERLEQELFSGGNTGINFEKYDDIPVEATG) are interaction with CHUK. The Q motif motif lies at 180-208 (ESFSDVEMGEIIMGNIELTRYTRPTPVQK). Residue S181 is modified to Phosphoserine; by TBK1; in vitro. S183 is subject to Phosphoserine; by TBK1. 200 to 207 (YTRPTPVQ) provides a ligand contact to ATP. One can recognise a Helicase ATP-binding domain in the interval 211–403 (IPIIKEKRDL…RDFLDEYIFL (193 aa)). Residue K215 forms a Glycyl lysine isopeptide (Lys-Gly) (interchain with G-Cter in SUMO2) linkage. Position 224-231 (224-231 (AQTGSGKT)) interacts with ATP. A Phosphoserine; by TBK1; in vitro modification is found at S240. The segment at 250-259 (ALRAMKENGR) is involved in stimulation of ATPase activity by DNA and RNA, nucleic acid binding and unwinding and HIV-1 replication. A Phosphoserine; by TBK1; in vitro modification is found at S269. Positions 347 to 350 (DEAD) match the DEAD box motif. Positions 409–662 (GSTSENITQK…NSQGVDWWGN (254 aa)) are interaction with HCV core protein. The region spanning 414-575 (NITQKVVWVE…EVPSWLENMA (162 aa)) is the Helicase C-terminal domain. S429 is subject to Phosphoserine; by CSNK1E and TBK1; in vitro. At T438 the chain carries Phosphothreonine; by TBK1; in vitro. 2 positions are modified to phosphoserine; by TBK1; in vitro: S442 and S456. T469 is subject to Phosphothreonine; by CSNK1E; in vitro. The residue at position 470 (S470) is a Phosphoserine; by CSNK1E; in vitro. S520 is subject to Phosphoserine; by TBK1; in vitro. Positions 536–661 (GNLGLATSFF…YNSQGVDWWG (126 aa)) are interaction with NXF1. T542 carries the post-translational modification Phosphothreonine; by TBK1; in vitro. S543 is modified (phosphoserine; by CSNK1E and TBK1; in vitro). Omega-N-methylarginine is present on R592. Residues S594, S605, and S612 each carry the phosphoserine modification. The tract at residues 601-634 (DYRQSSGASSSSFSSSRASSSRSGGGGHGSSRGF) is disordered. Residues 604-622 (QSSGASSSSFSSSRASSSR) show a composition bias toward low complexity. Omega-N-methylarginine occurs at positions 617 and 632. A compositionally biased stretch (gly residues) spans 623–634 (SGGGGHGSSRGF).

Belongs to the DEAD box helicase family. DDX3/DED1 subfamily. In terms of assembly, homodimer; can bind RNA as a monomer and as a dimer/oligomer. Interacts with TDRD3. Interacts (when phosphorylated at Ser-102) with IRF3; the interaction facilitates the phosphorylation and activation of IRF3 by IKBKE. Directly interacts with XPO1/CRM1. The interaction with XPO1/CMR1 is dependent on the DDX3X nuclear export signal motif and XPO1 interaction with GTPase RAN in its active GTP-bound form. Weakly interacts with TBKBP1/SINTBAD. Directly interacts with TRAF3; this interaction stimulates TRAF3 'Lys-63' ubiquitination. Interacts with CSNK1E in a Wnt-dependent manner; this interaction greatly enhances CSNK1E affinity for ATP, stimulates its kinase activity and promotes CSNK1E-mediated DVL2 phosphorylation. In the presence of RNA, the interaction is decreased. Also interacts with CSNK1D and stimulates its kinase activity. Interacts with TRPV4; this interaction is decreased when the TRPV4 channel is activated, leading to DDX3X relocalization to the nucleus. Interacts with MAP3K14/NIK. Directly interacts with CHUK/IKKA after physiological activation of the TLR7 and TLR8 pathways; this interaction enhances CHUK autophosphorylation. May associate with EIF4F complex, composed of at least EIF4A, EIF4E and EIF4G1/EIF4G3. Directly interacts with EIF4E in an RNA-independent manner; this interaction enhances EIF4E cap-binding ability. Directly interacts with EIF4G1 in an RNA-independent manner. DDX3X competes with EIF4G1 for interaction with EIF4E. Interacts with EIF4A1 and EIF2S1 in an RNA-independent manner. Associates with the eukaryotic translation initiation factor 3 (eIF-3) complex, including with EIF3B and EIF3C subunits. Directly interacts with IKBKE/IKKE; this interaction stimulates IKBKE activating autophosphorylation and is induced upon viral infection. Interacts with TBK1. Interacts with SP1; this interaction potentiates SP1-induced CDKN1A/WAF1/CIP1 transcription. Interacts with GSK3A and GSK3B. Interacts with several death receptors, inclusing FAS, TNFRSF10A and TNFRSF10B. Recruited to TNFRSF10B in the absence of receptor stimulation. When TNFRSF10B is stimulated, further recruited to the receptor and cleaved by caspases. A large proteolytic fragment remains associated with TNFRSF10B. Interacts (via C-terminus) with NXF1/TAP; this interaction may be partly involved in DDX3X nuclear export and in NXF1 localization to stress granules. Identified in an mRNP complex, composed of at least DHX9, DDX3X, ELAVL1, HNRNPU, IGF2BP1/2, ILF3, PABPC1, PCBP2, PTBP2, STAU1, STAU2, SYNCRIP and YBX1. The interaction with IGF2BP1/2 is RNA-dependent. Directly interacts with PABPC1/PABP1 in an RNA-independent manner. This interaction increases in stressed cells and decreases during cell recovery. Interacts (via C-terminus) with MAVS/IPS-1; this interaction occurs rapidly, but transiently after Sendai virus infection. The interaction potentiates MAVS-mediated IFNB induction. Interacts with ERCC6/CBS. Interacts with DHX33 in an RNA-independent manner. Interacts with DDX5 in the cytoplasm; this interaction may be more efficient when both proteins are unphosphorylated. Interacts with RIGI/RIG-1. Interacts with IFIH1/MDA5. Interacts with NCAPH; this interaction may be important for the NCAPH localization at condensing chromosomes during mitosis. Interacts with NLRP3 (via NACHT domain) under inflammasome-activating conditions. Interacts with CAPRIN1. Interacts with HNF4A and NR0B2/SHP in an RNA-independent manner; this interaction disrupts the interaction between HNF4 and NR0B2 that forms inactive heterodimers and enhances the formation of active HNF4 homodimers. Interacts with CREBBP/CBP. Interacts with EP300/p300. Interacts with gamma-tubulin. Interacts with phosphorylated TP53. Directly interacts with RELA/p65; this interaction may trap RELA in the cytoplasm, impairing nuclear relocalization upon TNF activating signals. As to quaternary structure, (Microbial infection) Interacts with hepatitis B virus (HBV) polymerase in the cytoplasm; this interaction may inhibit DDX3X interaction with the IKBKE/TBK1 complex, and hence impair IKBKE/TBK1-mediated increase in IFNB production. (Microbial infection) Directly interacts with hepatitis C virus (HCV) core protein in the cytoplasm. In terms of assembly, (Microbial infection) Interacts with vaccinia virus (VACV) protein K7. As to quaternary structure, (Microbial infection) Interacts with HIV-1 protein Rev. (Microbial infection) Interacts with Venezuelan equine encephalitis virus non-structural protein 3. Phosphorylated by TBK1; the phosphorylation is required for the synergistic induction of IFNB mediated by TBK1 and DDX3X. Phosphorylated by IKBKE at Ser-102 after ssRNA viral infection; enhances the induction of INFB promoter by IRF3. The cytoplasmic form is highly phosphorylated in the G1/S phase of the cell cycle and much less at G2/M. Phosphorylation by CSNK1E may inhibit RNA-stimulated ATPase activity. Post-translationally, upon stimulation of death receptors, including TNFRSF10B, recruited to receptors and cleaved by caspases. Proteolytic fragments remain associated with the receptors. This cleavage presumably inactivates DDX3X anti-apoptotic function. In terms of processing, ubiquitinated by RNF39 via 'Lys-48'-linked ubiquitination; leading to proteasomal degradation. Widely expressed. In testis, expressed in spermatids. Expressed in epidermis and liver (at protein level).

It localises to the cell membrane. It is found in the nucleus. Its subcellular location is the cytoplasm. The protein resides in the stress granule. The protein localises to the inflammasome. It localises to the cell projection. It is found in the lamellipodium. Its subcellular location is the cytoskeleton. The protein resides in the microtubule organizing center. The protein localises to the centrosome. The catalysed reaction is ATP + H2O = ADP + phosphate + H(+). Functionally, multifunctional ATP-dependent RNA helicase. The ATPase activity can be stimulated by various ribo-and deoxynucleic acids indicative for a relaxed substrate specificity. In vitro can unwind partially double-stranded DNA with a preference for 5'-single-stranded DNA overhangs. Binds RNA G-quadruplex (rG4s) structures, including those located in the 5'-UTR of NRAS mRNA. Involved in many cellular processes, which do not necessarily require its ATPase/helicase catalytic activities. Involved in transcription regulation. Positively regulates CDKN1A/WAF1/CIP1 transcription in an SP1-dependent manner, hence inhibits cell growth. This function requires its ATPase, but not helicase activity. CDKN1A up-regulation may be cell-type specific. Binds CDH1/E-cadherin promoter and represses its transcription. Potentiates HNF4A-mediated MTTP transcriptional activation; this function requires ATPase, but not helicase activity. Facilitates HNF4A acetylation, possibly catalyzed by CREBBP/EP300, thereby increasing the DNA-binding affinity of HNF4 to its response element. In addition, disrupts the interaction between HNF4 and SHP that forms inactive heterodimers and enhances the formation of active HNF4 homodimers. By promoting HNF4A-induced MTTP expression, may play a role in lipid homeostasis. May positively regulate TP53 transcription. Associates with mRNPs, predominantly with spliced mRNAs carrying an exon junction complex (EJC). Involved in the regulation of translation initiation. Not involved in the general process of translation, but promotes efficient translation of selected complex mRNAs, containing highly structured 5'-untranslated regions (UTR). This function depends on helicase activity. Might facilitate translation by resolving secondary structures of 5'-UTRs during ribosome scanning. Alternatively, may act prior to 43S ribosomal scanning and promote 43S pre-initiation complex entry to mRNAs exhibiting specific RNA motifs, by performing local remodeling of transcript structures located close to the cap moiety. Independently of its ATPase activity, promotes the assembly of functional 80S ribosomes and disassembles from ribosomes prior to the translation elongation process. Positively regulates the translation of cyclin E1/CCNE1 mRNA and consequently promotes G1/S-phase transition during the cell cycle. May activate TP53 translation. Required for endoplasmic reticulum stress-induced ATF4 mRNA translation. Independently of its ATPase/helicase activity, enhances IRES-mediated translation; this activity requires interaction with EIF4E. Independently of its ATPase/helicase activity, has also been shown specifically repress cap-dependent translation, possibly by acting on translation initiation factor EIF4E. Involved in innate immunity, acting as a viral RNA sensor. Binds viral RNAs and promotes the production of type I interferon (IFN-alpha and IFN-beta). Potentiate MAVS/RIGI-mediated induction of IFNB in early stages of infection. Enhances IFNB1 expression via IRF3/IRF7 pathway and participates in NFKB activation in the presence of MAVS and TBK1. Involved in TBK1 and IKBKE-dependent IRF3 activation leading to IFNB induction, acts as a scaffolding adapter that links IKBKE and IRF3 and coordinates their activation. Involved in the TLR7/TLR8 signaling pathway leading to type I interferon induction, including IFNA4 production. In this context, acts as an upstream regulator of IRF7 activation by MAP3K14/NIK and CHUK/IKKA. Stimulates CHUK autophosphorylation and activation following physiological activation of the TLR7 and TLR8 pathways, leading to MAP3K14/CHUK-mediated activatory phosphorylation of IRF7. Also stimulates MAP3K14/CHUK-dependent NF-kappa-B signaling. Negatively regulates TNF-induced IL6 and IL8 expression, via the NF-kappa-B pathway. May act by interacting with RELA/p65 and trapping it in the cytoplasm. May also bind IFNB promoter; the function is independent of IRF3. Involved in both stress and inflammatory responses. Independently of its ATPase/helicase activity, required for efficient stress granule assembly through its interaction with EIF4E, hence promotes survival in stressed cells. Independently of its helicase activity, regulates NLRP3 inflammasome assembly through interaction with NLRP3 and hence promotes cell death by pyroptosis during inflammation. This function is independent of helicase activity. Therefore DDX3X availability may be used to interpret stress signals and choose between pro-survival stress granules and pyroptotic NLRP3 inflammasomes and serve as a live-or-die checkpoint in stressed cells. In association with GSK3A/B, negatively regulates extrinsic apoptotic signaling pathway via death domain receptors, including TNFRSF10B, slowing down the rate of CASP3 activation following death receptor stimulation. Cleavage by caspases may inactivate DDX3X and relieve the inhibition. Independently of its ATPase/helicase activity, allosteric activator of CSNK1E. Stimulates CSNK1E-mediated phosphorylation of DVL2, thereby involved in the positive regulation of Wnt/beta-catenin signaling pathway. Also activates CSNK1A1 and CSNK1D in vitro, but it is uncertain if these targets are physiologically relevant. ATPase and casein kinase-activating functions are mutually exclusive. May be involved in mitotic chromosome segregation. Its function is as follows. (Microbial infection) Facilitates hepatitis C virus (HCV) replication. During infection, HCV core protein inhibits the interaction between MAVS and DDX3X and therefore impairs MAVS-dependent INFB induction and might recruit DDX3X to HCV replication complex. (Microbial infection) Facilitates HIV-1 replication. Acts as a cofactor for XPO1-mediated nuclear export of HIV-1 Rev RNAs. This function is strongly stimulated in the presence of TBK1 and requires DDX3X ATPase activity. In terms of biological role, (Microbial infection) Facilitates Zika virus (ZIKV) replication. Functionally, (Microbial infection) Facilitates Dengue virus (DENV) replication. Its function is as follows. (Microbial infection) Facilitates Venezuelan equine encephalitis virus (VEEV) replication. In Homo sapiens (Human), this protein is ATP-dependent RNA helicase DDX3X (DDX3X).